A 377-amino-acid polypeptide reads, in one-letter code: Nucleosome assembly protein 1;3 (377 aa).

The stretch at 26–80 (VNVLKNKLQGLTGKHSNVLENLSPNVRKRVEVLREIQTQHDELEAKFFEERAALE) forms a coiled coil. The short motif at 47 to 62 (LSPNVRKRVEVLREIQ) is the Nuclear export signal element. The Nuclear localization signal signature appears at 223–228 (KKKPKK). The interval 298 to 377 (EAAQDEDYID…GERPPECKQQ (80 aa)) is disordered. Acidic residues predominate over residues 300-341 (AQDEDYIDLEDDEDEEDDEDEDEDEEDEEEEDEDEDDDDEDE). Residues 345-357 (KTKKKSSAGRKRS) show a composition bias toward basic residues. A Cysteine methyl ester modification is found at Cys374. A lipid anchor (S-farnesyl cysteine) is attached at Cys374. The propeptide at 375–377 (KQQ) is removed in mature form.

It belongs to the nucleosome assembly protein (NAP) family. As to quaternary structure, can form homomeric and heteromeric protein complexes with NAP1;4. Binds histones H2A and H2B in vivo. Also able to bind histones H1 and H4 in vitro. Interacts with CYCB1;1 and with alpha tubulin.

It is found in the nucleus. The protein resides in the cytoplasm. May modulate chromatin structure by regulation of nucleosome assembly/disassembly. Could function together with B-type cyclins in the regulation of microtubule dynamics. The polypeptide is Nucleosome assembly protein 1;3 (NAP1;3) (Nicotiana tabacum (Common tobacco)).